The following is a 407-amino-acid chain: Enolase-binding protein (407 aa).

Positions 1-24 (MALGNALYPLTATVFLCVVGFATS) are cleaved as a signal peptide. Over 25 to 366 (SNENSRFLIN…FGQAYPGFRN (342 aa)) the chain is Extracellular. N52, N78, N161, and N250 each carry an N-linked (GlcNAc...) asparagine glycan. Residues 367–387 (VAIGAAILFFSVLGVAIIDMI) form a helical membrane-spanning segment. At 388–407 (RRTIANRRAKRLHLGKYSRT) the chain is on the cytoplasmic side.

In terms of assembly, (Microbial infection) Interacts with ENO/enolase from parasites P.berghei and P.falciparum. In terms of tissue distribution, expressed in the female midgut epithelium.

The protein localises to the cell membrane. (Microbial infection) Acts as a receptor for ENO/enolase from parasites P.berghei and P.falciparum. The interaction is involved in the invasion of the mosquito midgut by P.berghei ookinete, but is dispensable for P.falciparum ookinete invasion. The chain is Enolase-binding protein from Anopheles gambiae (African malaria mosquito).